We begin with the raw amino-acid sequence, 68 residues long: Phosphatidylinositol N-acetylglucosaminyltransferase ERI1 subunit (68 aa).

2 consecutive transmembrane segments (helical) span residues 8-28 (FLVL…FYWL) and 34-54 (FLHY…WALI).

In terms of assembly, component of the phosphatidylinositol N-acetylglucosaminyltransferase (GPI-GlcNAc transferase) complex composed of at least GPI1, GPI2, GPI3, GPI15, GPI19 and ERI1. Interacts with GPI2. Interacts with GTP-bound RAS2 in an effector loop-dependent manner.

It localises to the endoplasmic reticulum membrane. Its pathway is glycolipid biosynthesis; glycosylphosphatidylinositol-anchor biosynthesis. Its function is as follows. Probable component of the GPI-GlcNAc transferase (GPI-GnT) complex in the endoplasmic reticulum, a complex that catalyzes transfer of GlcNAc from UDP-GlcNAc to an acceptor phosphatidylinositol, the first step in the production of GPI-anchors for cell surface proteins. Ras may inhibit the enzyme activity of the GPI-GnT complex via the association between ERI1 and RAS2. The protein is Phosphatidylinositol N-acetylglucosaminyltransferase ERI1 subunit (ERI1) of Saccharomyces cerevisiae (strain ATCC 204508 / S288c) (Baker's yeast).